The chain runs to 809 residues: MANVSKKVSWSGRDLDDDEAAPLLRRAPRLGVPAGEAAPLLNGAGPAAARASPHSAFFRIGQLSSVELDDELLDPDMDPPHPFPREIPHNEKLLSLKYESLDYDNSENQLFLEEERRINHTAFRTVEIKRWVICAMVGILTGLVACFIDIVVEKLAGLKYRLVKDNIDRFTEHGGLSFSLLLWAALNAAFVLLGSTIVAFIEPVAAGSGIPQIKCFLNGVKIPHVVRLKTLVIKVSGVILSVVGGLAVGKEGPMIHSGSVIAAGISQGRSTSLKRDFKIFEYFRRDTEKRDFVSAGAAAGVSAAFGAPVGGVLFSLEEGASFWNQFLTWRIFFASMISTFTLNFVLSIYHGNAWDLSSPGLINFGRFDTETMVYVIHEIPIFIAMGVVGGILGAVFNALNYWLTMFRIRYVHRPCLQVVEATLVAAVTATAAFVLIYSSRDCQPLRGSSVSYPLQLFCADGEYNSMAVAFFNTPEKSVVSLFHDPPGSYNPMTLGLFTLVYFFLACWTYGLTVSAGVFIPSLLIGAAWGRLFGISLSYITGAAVWADPGKYALMGAAAQLGGIVRMTLSLTVIMMEATSSVTYGFPIMLVLMTAKIVGDVFIEGLYDMHIQLQSVPFLHWEAPVTSHSLTAREVMSTPVTCLRRREKVGVIVDVLSSTASNHNGFPVVEDADGTQPARLQGLILRSQLIVLLKHKVFVERSSMGLLRRRLRLKDFRDAYPRFPPIQSIHVSQDERECTMDLSEFMNPSPYTVPQEASLPRVFKLFRALGLRHLVVVDNCNQVVGLVTRKDLARYRLGKGGLEELSLAQT.

Topologically, residues 1–130 are cytoplasmic; the sequence is MANVSKKVSW…TAFRTVEIKR (130 aa). 2 positions are modified to phosphoserine: serine 9 and serine 64. Helical transmembrane passes span 131-163 and 178-201; these read WVIC…YRLV and FSLL…VAFI. The Selectivity filter part_1 signature appears at 207–211; that stretch reads GSGIP. Serine 208 is a chloride binding site. Residues 210–217 constitute an intramembrane region (helical); that stretch reads IPQIKCFL. Helical transmembrane passes span 227-245 and 251-268; these read RLKT…VVGG and EGPM…ISQG. Positions 249–253 match the Selectivity filter part_2 motif; that stretch reads GKEGP. Intramembrane regions (helical) lie at residues 292–304 and 308–316; these read FVSA…VSAA and PVGGVLFSL. The next 5 helical transmembrane spans lie at 326–345, 379–409, 414–436, 491–511, and 516–539; these read FLTW…LNFV, IPIF…FRIR, PCLQ…FVLI, PMTL…TYGL, and GVFI…LSYI. The Selectivity filter part_3 signature appears at 516-520; that stretch reads GVFIP. Position 518 (phenylalanine 518) interacts with chloride. An intramembrane region (helical) is located at residues 549–563; sequence GKYALMGAAAQLGGI. An intramembrane region (note=Loop between two helices) is located at residues 564 to 566; it reads VRM. The helical intramembrane region spans 567–578; it reads TLSLTVIMMEAT. An intramembrane region (note=Loop between two helices) is located at residues 579 to 582; sequence SSVT. Residues 583 to 601 form a helical membrane-spanning segment; that stretch reads YGFPIMLVLMTAKIVGDVF. The Cytoplasmic portion of the chain corresponds to 602 to 809; that stretch reads IEGLYDMHIQ…GLEELSLAQT (208 aa). Residue tyrosine 606 participates in chloride binding. CBS domains follow at residues 635–699 and 745–803; these read MSTP…VFVE and MNPS…GLEE. ATP-binding positions include 662 to 664 and 787 to 790; these read HNG and TRKD. Serine 805 bears the Phosphoserine mark.

This sequence belongs to the chloride channel (TC 2.A.49) family. ClC-7/CLCN7 subfamily. As to quaternary structure, chloride channel 7 are heteromers of alpha (CLCN7) and beta (OSTM1) subunits.

It localises to the lysosome membrane. It carries out the reaction 2 chloride(in) + H(+)(out) = 2 chloride(out) + H(+)(in). Its function is as follows. Slowly voltage-gated channel mediating the exchange of chloride ions against protons. Functions as antiporter and contributes to the acidification of the lysosome lumen and may be involved in maintaining lysosomal pH. The CLC channel family contains both chloride channels and proton-coupled anion transporters that exchange chloride or another anion for protons. The presence of conserved gating glutamate residues is typical for family members that function as antiporters. This Bos taurus (Bovine) protein is H(+)/Cl(-) exchange transporter 7 (CLCN7).